The following is a 150-amino-acid chain: SsrA-binding protein (150 aa).

Belongs to the SmpB family.

It is found in the cytoplasm. Required for rescue of stalled ribosomes mediated by trans-translation. Binds to transfer-messenger RNA (tmRNA), required for stable association of tmRNA with ribosomes. tmRNA and SmpB together mimic tRNA shape, replacing the anticodon stem-loop with SmpB. tmRNA is encoded by the ssrA gene; the 2 termini fold to resemble tRNA(Ala) and it encodes a 'tag peptide', a short internal open reading frame. During trans-translation Ala-aminoacylated tmRNA acts like a tRNA, entering the A-site of stalled ribosomes, displacing the stalled mRNA. The ribosome then switches to translate the ORF on the tmRNA; the nascent peptide is terminated with the 'tag peptide' encoded by the tmRNA and targeted for degradation. The ribosome is freed to recommence translation, which seems to be the essential function of trans-translation. The chain is SsrA-binding protein from Rubrobacter xylanophilus (strain DSM 9941 / JCM 11954 / NBRC 16129 / PRD-1).